We begin with the raw amino-acid sequence, 227 residues long: MICOS complex subunit MIC19 (227 aa).

Residue Gly2 is the site of N-myristoyl glycine attachment. A Phosphoserine modification is found at Ser29. A disordered region spans residues 34–60 (DRMKETSPSGPKSQRYSGTYGASVSDE). Residues 39–55 (TSPSGPKSQRYSGTYGA) show a composition bias toward polar residues. At Tyr49 the chain carries Phosphotyrosine. Ser50, Ser56, and Ser58 each carry phosphoserine. Lys142 carries the N6-acetyllysine modification. In terms of domain architecture, CHCH spans 180–222 (HPVCADLQAQILQCYRQNTQQTLSCSALASQYMRCVNQAKQST). Short sequence motifs (cx9C motif) lie at residues 183 to 193 (CADLQAQILQC) and 204 to 214 (CSALASQYMRC). Disulfide bonds link Cys183/Cys214 and Cys193/Cys204.

This sequence belongs to the MICOS complex subunit Mic19 family. Metazoan Mic19 subfamily. As to quaternary structure, component of the mitochondrial contact site and cristae organizing system (MICOS) complex, composed of at least MICOS10/MIC10, CHCHD3/MIC19, CHCHD6/MIC25, APOOL/MIC27, IMMT/MIC60, APOO/MIC23/MIC26 and MICOS13/MIC13. This complex was also known under the names MINOS or MitOS complex. The MICOS complex associates with mitochondrial outer membrane proteins SAMM50, MTX1 and MTX2 (together described as components of the mitochondrial outer membrane sorting assembly machinery (SAM) complex) and DNAJC11, mitochondrial inner membrane protein TMEM11 and with HSPA9. The MICOS and SAM complexes together with DNAJC11 are part of a large protein complex spanning both membranes termed the mitochondrial intermembrane space bridging (MIB) complex. Interacts with HSPA1A/HSPA1B and OPA1, preferentially with the soluble OPA1 form. Interacts with IMMT/MIC60.

It localises to the mitochondrion inner membrane. The protein resides in the cytoplasm. Its subcellular location is the nucleus. The protein localises to the mitochondrion. Functionally, component of the MICOS complex, a large protein complex of the mitochondrial inner membrane that plays crucial roles in the maintenance of crista junctions, inner membrane architecture, and formation of contact sites to the outer membrane. Has also been shown to function as a transcription factor which binds to the BAG1 promoter and represses BAG1 transcription. Plays an important role in the maintenance of the MICOS complex stability and the mitochondrial cristae morphology. The chain is MICOS complex subunit MIC19 (CHCHD3) from Bos taurus (Bovine).